The chain runs to 596 residues: Elongation factor 4 (596 aa).

Residues 2 to 183 (ENIRNFSIIA…AIIERIPAPS (182 aa)) enclose the tr-type G domain. GTP-binding positions include 14–19 (DHGKST) and 130–133 (NKID).

It belongs to the TRAFAC class translation factor GTPase superfamily. Classic translation factor GTPase family. LepA subfamily.

It is found in the cell inner membrane. It carries out the reaction GTP + H2O = GDP + phosphate + H(+). In terms of biological role, required for accurate and efficient protein synthesis under certain stress conditions. May act as a fidelity factor of the translation reaction, by catalyzing a one-codon backward translocation of tRNAs on improperly translocated ribosomes. Back-translocation proceeds from a post-translocation (POST) complex to a pre-translocation (PRE) complex, thus giving elongation factor G a second chance to translocate the tRNAs correctly. Binds to ribosomes in a GTP-dependent manner. This Nitratiruptor sp. (strain SB155-2) protein is Elongation factor 4.